The sequence spans 407 residues: Peptidase T (407 aa).

H82 contacts Zn(2+). D84 is a catalytic residue. D143 serves as a coordination point for Zn(2+). E177 acts as the Proton acceptor in catalysis. E178, D200, and H382 together coordinate Zn(2+).

It belongs to the peptidase M20B family. Zn(2+) serves as cofactor.

The protein resides in the cytoplasm. It catalyses the reaction Release of the N-terminal residue from a tripeptide.. Cleaves the N-terminal amino acid of tripeptides. This chain is Peptidase T, found in Streptococcus uberis (strain ATCC BAA-854 / 0140J).